Consider the following 190-residue polypeptide: Elongation factor P (190 aa).

This sequence belongs to the elongation factor P family.

Its subcellular location is the cytoplasm. It participates in protein biosynthesis; polypeptide chain elongation. Its function is as follows. Involved in peptide bond synthesis. Stimulates efficient translation and peptide-bond synthesis on native or reconstituted 70S ribosomes in vitro. Probably functions indirectly by altering the affinity of the ribosome for aminoacyl-tRNA, thus increasing their reactivity as acceptors for peptidyl transferase. This chain is Elongation factor P (efp), found in Mycoplasma genitalium (strain ATCC 33530 / DSM 19775 / NCTC 10195 / G37) (Mycoplasmoides genitalium).